The chain runs to 87 residues: U-scoloptoxin(23)-Er1a (87 aa).

The signal sequence occupies residues 1–29 (MSLIVVRTHSFLFVLVLLLFASVFHSVDS). A disordered region spans residues 32 to 54 (FNPNGRYGRRDSASALSDASENK).

It belongs to the scoloptoxin-23 family. As to expression, expressed by the venom gland.

Its subcellular location is the secreted. This is U-scoloptoxin(23)-Er1a from Ethmostigmus rubripes (Giant centipede).